A 189-amino-acid polypeptide reads, in one-letter code: Protein C1orf43 homolog (189 aa).

The helical transmembrane segment at 11-31 threads the bilayer; the sequence is VNVVLVMAYGSLVFVLLFIFV.

It localises to the membrane. The protein localises to the golgi apparatus. The protein resides in the mitochondrion. General regulator of phagocytosis. Required to uptake Gram negative bacterium by macrophages. This chain is Protein C1orf43 homolog, found in Pongo abelii (Sumatran orangutan).